Here is a 489-residue protein sequence, read N- to C-terminus: 2-(3-amino-3-carboxypropyl)histidine synthase subunit 2 (489 aa).

Methionine 1 carries the N-acetylmethionine modification. Serine 7 is subject to Phosphoserine. Residues cysteine 89, cysteine 110, and cysteine 341 each coordinate [4Fe-4S] cluster. Positions 398-489 (PPPESELWDT…AIAYEDEGSG (92 aa)) are required for function. At threonine 435 the chain carries Phosphothreonine. Phosphoserine is present on residues serine 446 and serine 456. A Phosphothreonine modification is found at threonine 467. Serine 488 carries the post-translational modification Phosphoserine.

It belongs to the DPH1/DPH2 family. DPH2 subfamily. Component of the 2-(3-amino-3-carboxypropyl)histidine synthase complex composed of DPH1, DPH2, DPH3 and a NADH-dependent reductase. Interacts with DPH1. [4Fe-4S] cluster is required as a cofactor.

The protein operates within protein modification; peptidyl-diphthamide biosynthesis. Functionally, required for the first step of diphthamide biosynthesis, a post-translational modification of histidine which occurs in elongation factor 2. DPH1 and DPH2 transfer a 3-amino-3-carboxypropyl (ACP) group from S-adenosyl-L-methionine (SAM) to a histidine residue, the reaction is assisted by a reduction system comprising DPH3 and a NADH-dependent reductase. Facilitates the reduction of the catalytic iron-sulfur cluster found in the DPH1 subunit. This chain is 2-(3-amino-3-carboxypropyl)histidine synthase subunit 2 (DPH2), found in Cricetulus griseus (Chinese hamster).